Reading from the N-terminus, the 461-residue chain is Porin AaxA (461 aa).

An N-terminal signal peptide occupies residues 1–22 (MSFRSVLLTALLSLSFTTTMQA).

Belongs to the OprB family.

Its subcellular location is the cell outer membrane. Its function is as follows. Facilitates L-arginine uptake, as part of the AaxABC system. The arginine uptake by the bacterium in the macrophage may be a virulence factor against the host innate immune response. This Chlamydia trachomatis serovar A (strain ATCC VR-571B / DSM 19440 / HAR-13) protein is Porin AaxA (aaxA).